Reading from the N-terminus, the 965-residue chain is Collagen alpha-1(I) chain (965 aa).

Pro residues predominate over residues 1–21 (SVPGPMGPSGPRGLPGPPGPG). The disordered stretch occupies residues 1 to 965 (SVPGPMGPSG…PGPPGPPGPP (965 aa)). Residues P15, P18, P20, P29, P32, P35, P49, P64, P70, P79, and P85 each carry the 4-hydroxyproline modification. A compositionally biased stretch (basic and acidic residues) spans 52–66 (NGDDGEAGKPGRPGE). The residue at position 88 (K88) is a 5-hydroxylysine; alternate. Residue K88 is glycosylated (O-linked (Gal...) hydroxylysine; alternate). Residue S94 is modified to Phosphoserine. Residues 102-118 (DAGPAGPKGEPGSPGEN) are compositionally biased toward low complexity. 4-hydroxyproline occurs at positions 112, 115, 121, 130, 136, 157, 166, 169, 196, 199, 211, 217, 226, 232, 235, and 250. The segment covering 136–154 (PGASGPAGARGNDGATGAA) has biased composition (low complexity). The span at 156 to 168 (PPGPTGPAGPPGF) shows a compositional bias: pro residues. Low complexity predominate over residues 202 to 241 (AGAAGPAGNPGADGQPGAKGANGAPGIAGAPGFPGARGPS). K253 is subject to 5-hydroxylysine. A 4-hydroxyproline mark is found at P259, P262, P273, P282, P297, P303, P312, and P318. The span at 307 to 327 (GERGGPGSRGFPGADGAGPKG) shows a compositional bias: gly residues. K326 bears the 5-hydroxylysine mark. A 4-hydroxyproline mark is found at P335, P344, P350, P356, P365, P368, P377, P386, P392, P404, P413, P422, P425, P443, P460, P466, P472, P480, P492, P501, P509, P515, and P524. The segment covering 359–385 (KGLTGSPGSPGPDGKTGPPGPAGQDGR) has biased composition (low complexity). The segment covering 394–413 (ARGQAGVMGFPGPKGAAGEP) has biased composition (low complexity). The span at 472–482 (PGEADLGAPGP) shows a compositional bias: low complexity. The residue at position 536 (K536) is a 5-hydroxylysine. P542, P557, and P563 each carry 4-hydroxyproline. Over residues 569–583 (SGPSGPAGPTGARGA) the composition is skewed to low complexity. S572 is subject to Phosphoserine. 4-hydroxyproline is present on residues P584, P590, P593, P602, P608, P626, P635, and P644. Residues 596–623 (AGFAGPPGADGQPGAKGEPGDAGAKGDA) are compositionally biased toward low complexity. The span at 625-637 (PPGPAGPTGPPGP) shows a compositional bias: pro residues. Residue K647 is modified to 5-hydroxylysine. The segment covering 652 to 668 (SAGPPGATGFPGAAGRV) has biased composition (low complexity). Residues P656 and P662 each carry the 4-hydroxyproline modification. P670 is subject to 3-hydroxyproline. 4-hydroxyproline is present on residues P671, P680, P683, P704, P713, P721, P730, P748, P757, P760, P766, P771, P777, P783, P791, and P797. The span at 697 to 706 (ETGPAGRPGE) shows a compositional bias: low complexity. Residues 718-730 (KGSPGADGPAGAP) are compositionally biased toward low complexity. A compositionally biased stretch (pro residues) spans 768 to 780 (KGPPGPMGPPGLA). K806 is modified (5-hydroxylysine). Residues 815-830 (SGPPGAPGAPGAPGPV) are compositionally biased toward pro residues. 4-hydroxyproline is present on residues P818, P821, and P824. The span at 851 to 865 (AGPAGARGPAGPQGP) shows a compositional bias: low complexity. The segment covering 866–880 (RGDKGETGEQGDRGI) has biased composition (basic and acidic residues). K869 is subject to 5-hydroxylysine. K881 is modified (5-hydroxylysine; alternate). An O-linked (Gal...) hydroxylysine; alternate glycan is attached at K881. P896, P899, P917, and P932 each carry 4-hydroxyproline. Residues 899-932 (PGEQGPSGASGPAGPRGPPGSAGSPGKDGLNGLP) are compositionally biased toward low complexity. P937 carries the 3-hydroxyproline modification. P938 is subject to 4-hydroxyproline. The span at 950–965 (VGPPGPPGPPGPPGPP) shows a compositional bias: pro residues. P952 bears the 3-hydroxyproline mark. P953 is modified (4-hydroxyproline). P955 is modified (3-hydroxyproline). The residue at position 956 (P956) is a 4-hydroxyproline. P958 bears the 3-hydroxyproline mark. 3 positions are modified to 4-hydroxyproline: P959, P962, and P965.

It belongs to the fibrillar collagen family. As to quaternary structure, trimers of one alpha 2(I) and two alpha 1(I) chains. Post-translationally, contains mostly 4-hydroxyproline. Proline residues at the third position of the tripeptide repeating unit (G-X-Y) are hydroxylated in some or all of the chains. In terms of processing, contains 3-hydroxyproline at a few sites. This modification occurs on the first proline residue in the sequence motif Gly-Pro-Hyp, where Hyp is 4-hydroxyproline. Lysine residues at the third position of the tripeptide repeating unit (G-X-Y) are 5-hydroxylated in some or all of the chains. Post-translationally, O-glycosylated on hydroxylated lysine residues. The O-linked glycan consists of a Glc-Gal disaccharide. In terms of tissue distribution, expressed in bones.

Its subcellular location is the secreted. The protein localises to the extracellular space. It localises to the extracellular matrix. Functionally, type I collagen is a member of group I collagen (fibrillar forming collagen). The chain is Collagen alpha-1(I) chain from Scelidotherium sp. (strain SLP-2019) (South American ground sloth).